The primary structure comprises 149 residues: Nucleoside diphosphate kinase (149 aa).

The ATP site is built by lysine 9, phenylalanine 57, arginine 85, threonine 91, arginine 102, and asparagine 112. The Pros-phosphohistidine intermediate role is filled by histidine 115.

It belongs to the NDK family. As to quaternary structure, homotetramer. The cofactor is Mg(2+).

It is found in the cytoplasm. The catalysed reaction is a 2'-deoxyribonucleoside 5'-diphosphate + ATP = a 2'-deoxyribonucleoside 5'-triphosphate + ADP. The enzyme catalyses a ribonucleoside 5'-diphosphate + ATP = a ribonucleoside 5'-triphosphate + ADP. Major role in the synthesis of nucleoside triphosphates other than ATP. The ATP gamma phosphate is transferred to the NDP beta phosphate via a ping-pong mechanism, using a phosphorylated active-site intermediate. In Herpetosiphon aurantiacus (strain ATCC 23779 / DSM 785 / 114-95), this protein is Nucleoside diphosphate kinase.